Here is a 128-residue protein sequence, read N- to C-terminus: Ribosome-binding factor A (128 aa).

It belongs to the RbfA family. As to quaternary structure, monomer. Binds 30S ribosomal subunits, but not 50S ribosomal subunits or 70S ribosomes.

It is found in the cytoplasm. In terms of biological role, one of several proteins that assist in the late maturation steps of the functional core of the 30S ribosomal subunit. Associates with free 30S ribosomal subunits (but not with 30S subunits that are part of 70S ribosomes or polysomes). Required for efficient processing of 16S rRNA. May interact with the 5'-terminal helix region of 16S rRNA. This Herminiimonas arsenicoxydans protein is Ribosome-binding factor A.